We begin with the raw amino-acid sequence, 191 residues long: Fe/S biogenesis protein NfuA (191 aa).

Positions 149 and 152 each coordinate [4Fe-4S] cluster.

It belongs to the NfuA family. Homodimer. Requires [4Fe-4S] cluster as cofactor.

Its function is as follows. Involved in iron-sulfur cluster biogenesis. Binds a 4Fe-4S cluster, can transfer this cluster to apoproteins, and thereby intervenes in the maturation of Fe/S proteins. Could also act as a scaffold/chaperone for damaged Fe/S proteins. In Salmonella paratyphi A (strain ATCC 9150 / SARB42), this protein is Fe/S biogenesis protein NfuA.